The primary structure comprises 455 residues: Ribulose bisphosphate carboxylase large chain (455 aa).

N6,N6,N6-trimethyllysine is present on K5. Residues N114 and T164 each coordinate substrate. The active-site Proton acceptor is the K166. Substrate is bound at residue K168. Mg(2+)-binding residues include K192, D194, and E195. K192 is subject to N6-carboxylysine. The active-site Proton acceptor is the H285. 3 residues coordinate substrate: R286, H318, and S370.

Belongs to the RuBisCO large chain family. Type I subfamily. Heterohexadecamer of 8 large chains and 8 small chains; disulfide-linked. The disulfide link is formed within the large subunit homodimers. Mg(2+) serves as cofactor. In terms of processing, the disulfide bond which can form in the large chain dimeric partners within the hexadecamer appears to be associated with oxidative stress and protein turnover.

The protein localises to the plastid. It is found in the chloroplast. The catalysed reaction is 2 (2R)-3-phosphoglycerate + 2 H(+) = D-ribulose 1,5-bisphosphate + CO2 + H2O. It carries out the reaction D-ribulose 1,5-bisphosphate + O2 = 2-phosphoglycolate + (2R)-3-phosphoglycerate + 2 H(+). In terms of biological role, ruBisCO catalyzes two reactions: the carboxylation of D-ribulose 1,5-bisphosphate, the primary event in carbon dioxide fixation, as well as the oxidative fragmentation of the pentose substrate in the photorespiration process. Both reactions occur simultaneously and in competition at the same active site. In Lupinus microcarpus (Chick lupine), this protein is Ribulose bisphosphate carboxylase large chain.